We begin with the raw amino-acid sequence, 720 residues long: Long chain acyl-CoA synthetase 8 (720 aa).

Position 1 is an N-acetylmethionine (methionine 1). ATP is bound at residue 279 to 290; that stretch reads IMFTSGSTGLPK. The tract at residues 554–582 is fatty acid-binding; the sequence is DEKGTRWFYTGDIGRFHPDGCLEVIDRKK.

This sequence belongs to the ATP-dependent AMP-binding enzyme family. Requires Mg(2+) as cofactor.

It catalyses the reaction a long-chain fatty acid + ATP + CoA = a long-chain fatty acyl-CoA + AMP + diphosphate. The protein operates within lipid metabolism; fatty acid metabolism. In terms of biological role, activation of long-chain fatty acids for both synthesis of cellular lipids, and degradation via beta-oxidation. Preferentially uses palmitate, palmitoleate, oleate and linoleate. In Arabidopsis thaliana (Mouse-ear cress), this protein is Long chain acyl-CoA synthetase 8 (LACS8).